The following is a 316-amino-acid chain: HPr kinase/phosphorylase (316 aa).

Active-site residues include His-141 and Lys-162. Gly-156–Ser-163 serves as a coordination point for ATP. Position 163 (Ser-163) interacts with Mg(2+). Catalysis depends on Asp-180, which acts as the Proton acceptor; for phosphorylation activity. Proton donor; for dephosphorylation activity. The tract at residues Met-204–Asp-213 is important for the catalytic mechanism of both phosphorylation and dephosphorylation. Glu-205 provides a ligand contact to Mg(2+). The active site involves Arg-246. Positions Pro-267–Arg-272 are important for the catalytic mechanism of dephosphorylation.

This sequence belongs to the HPrK/P family. As to quaternary structure, homohexamer. Requires Mg(2+) as cofactor.

It carries out the reaction [HPr protein]-L-serine + ATP = [HPr protein]-O-phospho-L-serine + ADP + H(+). It catalyses the reaction [HPr protein]-O-phospho-L-serine + phosphate + H(+) = [HPr protein]-L-serine + diphosphate. Catalyzes the ATP- as well as the pyrophosphate-dependent phosphorylation of a specific serine residue in HPr, a phosphocarrier protein of the phosphoenolpyruvate-dependent sugar phosphotransferase system (PTS). HprK/P also catalyzes the pyrophosphate-producing, inorganic phosphate-dependent dephosphorylation (phosphorolysis) of seryl-phosphorylated HPr (P-Ser-HPr). The two antagonistic activities of HprK/P are regulated by several intracellular metabolites, which change their concentration in response to the absence or presence of rapidly metabolisable carbon sources (glucose, fructose, etc.) in the growth medium. Therefore, by controlling the phosphorylation state of HPr, HPrK/P is a sensor enzyme that plays a major role in the regulation of carbon metabolism and sugar transport: it mediates carbon catabolite repression (CCR), and regulates PTS-catalyzed carbohydrate uptake and inducer exclusion. This chain is HPr kinase/phosphorylase, found in Lactobacillus delbrueckii subsp. bulgaricus (strain ATCC 11842 / DSM 20081 / BCRC 10696 / JCM 1002 / NBRC 13953 / NCIMB 11778 / NCTC 12712 / WDCM 00102 / Lb 14).